Consider the following 138-residue polypeptide: Transcription antitermination protein NusB (138 aa).

It belongs to the NusB family.

In terms of biological role, involved in transcription antitermination. Required for transcription of ribosomal RNA (rRNA) genes. Binds specifically to the boxA antiterminator sequence of the ribosomal RNA (rrn) operons. This is Transcription antitermination protein NusB from Helicobacter pylori (strain P12).